The sequence spans 381 residues: Transaldolase 2 (381 aa).

The Schiff-base intermediate with substrate role is filled by Lys-141.

The protein belongs to the transaldolase family. Type 2 subfamily.

The protein localises to the cytoplasm. The enzyme catalyses D-sedoheptulose 7-phosphate + D-glyceraldehyde 3-phosphate = D-erythrose 4-phosphate + beta-D-fructose 6-phosphate. Its pathway is carbohydrate degradation; pentose phosphate pathway; D-glyceraldehyde 3-phosphate and beta-D-fructose 6-phosphate from D-ribose 5-phosphate and D-xylulose 5-phosphate (non-oxidative stage): step 2/3. In terms of biological role, transaldolase is important for the balance of metabolites in the pentose-phosphate pathway. This chain is Transaldolase 2 (tal2), found in Nostoc sp. (strain PCC 7120 / SAG 25.82 / UTEX 2576).